The primary structure comprises 1034 residues: Glycine dehydrogenase (decarboxylating), mitochondrial (1034 aa).

Residues 1–63 (MERARRLAML…LNGFGSQVRT (63 aa)) constitute a mitochondrion transit peptide. Lysine 770 carries the N6-(pyridoxal phosphate)lysine modification.

Belongs to the GcvP family. In terms of assembly, homodimer. The glycine cleavage system is composed of four proteins: P, T, L and H. The cofactor is pyridoxal 5'-phosphate.

It localises to the mitochondrion. It catalyses the reaction N(6)-[(R)-lipoyl]-L-lysyl-[glycine-cleavage complex H protein] + glycine + H(+) = N(6)-[(R)-S(8)-aminomethyldihydrolipoyl]-L-lysyl-[glycine-cleavage complex H protein] + CO2. Its function is as follows. The glycine cleavage system catalyzes the degradation of glycine. The P protein binds the alpha-amino group of glycine through its pyridoxal phosphate cofactor; CO(2) is released and the remaining methylamine moiety is then transferred to the lipoamide cofactor of the H protein. The polypeptide is Glycine dehydrogenase (decarboxylating), mitochondrial (GDCSP) (Flaveria anomala (Yellowtops)).